Consider the following 366-residue polypeptide: Peptide chain release factor 2 (366 aa).

Q253 is subject to N5-methylglutamine.

The protein belongs to the prokaryotic/mitochondrial release factor family. Post-translationally, methylated by PrmC. Methylation increases the termination efficiency of RF2.

The protein localises to the cytoplasm. Peptide chain release factor 2 directs the termination of translation in response to the peptide chain termination codons UGA and UAA. In Yersinia pseudotuberculosis serotype I (strain IP32953), this protein is Peptide chain release factor 2.